We begin with the raw amino-acid sequence, 509 residues long: Cytochrome P450 monooxygenase AFT11-1 (509 aa).

Residue Cys-432 participates in heme binding.

The protein belongs to the cytochrome P450 family. It depends on heme as a cofactor.

It participates in mycotoxin biosynthesis. Functionally, cytochrome P450 monooxygenase; part of the gene clusters that mediate the biosynthesis of the host-selective toxins (HSTs) AF-toxins responsible for Alternaria black spot of strawberry disease by the strawberry pathotype. AF-toxin I and III are valine derivatives of 2,3-dyhydroxy-isovaleric acid and 2-hydroxy-isovaleric acid respectively, while AF II is an isoleucine derivative of 2-hydroxy-valeric acid. These derivatives are bound to a 9,10-epoxy-8-hydroxy-9-methyl-decatrienoic acid (EDA) moiety. On cellular level, AF-toxins affect plasma membrane of susceptible cells and cause a sudden increase in loss of K(+) after a few minutes of toxin treatment. The aldo-keto reductase AFTS1 catalyzes the conversion of 2-keto-isovaleric acid (2-KIV) to 2-hydroxy-isovaleric acid (2-HIV) by reduction of its ketone to an alcohol. The acyl-CoA ligase AFT1, the hydrolase AFT2 and the enoyl-CoA hydratases AFT3 and AFT6, but also the polyketide synthase AFT9, the acyl-CoA dehydrogenase AFT10, the cytochrome P450 monooxygenase AFT11 and the oxidoreductase AFT12 are all involved in the biosynthesis of the AK-, AF- and ACT-toxin common EDA structural moiety. The exact function of each enzyme, and of additional enzymes identified within the AF-toxin clusters have still to be determined. This chain is Cytochrome P450 monooxygenase AFT11-1, found in Alternaria alternata (Alternaria rot fungus).